The following is a 48-amino-acid chain: Bacteriocin plantaricin-A (48 aa).

The propeptide occupies 1-25; that stretch reads MKIQIKGMKQLSNKEMQKIVGGKSS.

In terms of assembly, active plantaricin A is composed of an alpha chain and a beta chain.

Functionally, this heat stable bacteriocin inhibits the growth of closely related Lactobacillus species. It may act as a pore-forming protein, creating a channel in the cell membrane through a 'barrel stave' mechanism. This is Bacteriocin plantaricin-A (plnA) from Lactiplantibacillus plantarum (strain ATCC BAA-793 / NCIMB 8826 / WCFS1) (Lactobacillus plantarum).